A 94-amino-acid polypeptide reads, in one-letter code: Putative pterin-4-alpha-carbinolamine dehydratase (94 aa).

Belongs to the pterin-4-alpha-carbinolamine dehydratase family.

It catalyses the reaction (4aS,6R)-4a-hydroxy-L-erythro-5,6,7,8-tetrahydrobiopterin = (6R)-L-erythro-6,7-dihydrobiopterin + H2O. In Mycobacterium tuberculosis (strain ATCC 25177 / H37Ra), this protein is Putative pterin-4-alpha-carbinolamine dehydratase.